We begin with the raw amino-acid sequence, 338 residues long: Nuclear hormone receptor family member nhr-108 (338 aa).

A DNA-binding region (nuclear receptor) is located at residues 7–82 (NQPCMVCGEI…IGMLEKVVAS (76 aa)). An NR C4-type zinc finger spans residues 10-30 (CMVCGEISYSIRFGAVSCRAC). The NR C4-type; degenerate zinc finger occupies 46-65 (KRCNGACDLGKYHRKTCQSC). Residues 92-338 (NNQTILSGLE…QCPLYEATNE (247 aa)) enclose the NR LBD domain.

The protein belongs to the nuclear hormone receptor family.

Its subcellular location is the nucleus. Functionally, orphan nuclear receptor. The polypeptide is Nuclear hormone receptor family member nhr-108 (nhr-108) (Caenorhabditis elegans).